Here is a 1020-residue protein sequence, read N- to C-terminus: UPF0182 protein jk1603 (1020 aa).

The segment covering 1 to 18 (MSTPTPPSSGRPKQPFPS) has biased composition (pro residues). The disordered stretch occupies residues 1-23 (MSTPTPPSSGRPKQPFPSSPGSS). A run of 7 helical transmembrane segments spans residues 28-48 (ILGI…VVVS), 73-93 (LVLF…AAFL), 125-145 (FLVG…QSNW), 175-195 (LPFL…AFVI), 227-247 (LAVI…FDRY), 272-292 (QIVL…TIVL), and 300-320 (LAVA…PAML). The interval 924 to 998 (QEIDGSVVDP…KVNKTRESGT (75 aa)) is disordered. Composition is skewed to basic and acidic residues over residues 942 to 961 (KGDK…EQSS) and 969 to 998 (KSDD…ESGT).

It belongs to the UPF0182 family.

The protein localises to the cell membrane. This is UPF0182 protein jk1603 from Corynebacterium jeikeium (strain K411).